The sequence spans 57 residues: uncharacterized protein (57 aa).

Residues 21 to 37 (GTYTLVVAFVLAFLVYS) traverse the membrane as a helical segment.

It localises to the host membrane. This is an uncharacterized protein from Human herpesvirus 6B (strain Z29) (HHV-6 variant B).